The sequence spans 501 residues: Dynein regulatory complex subunit 5 (501 aa).

Residues 1 to 23 show a composition bias toward polar residues; the sequence is MQETVTTSALLDPSHSSVSTQDK. 2 disordered regions span residues 1–56 and 203–222; these read MQET…HPGA and PAQL…EMEE. The span at 24–34 shows a compositional bias: low complexity; the sequence is SSTGGHTSSTG. Residues 35–49 are compositionally biased toward polar residues; the sequence is PQPSKPSITPVSAKS. 5 LRR repeats span residues 308-321, 335-355, 363-383, 391-411, and 419-439; these read VLEE…LIGD, RLRV…QSLA, NLIS…QALA, CLTT…TLLS, and TLTS…KQLL.

This sequence belongs to the DRC5 family. As to quaternary structure, component of the nexin-dynein regulatory complex (N-DRC). Interacts with DRC1. Interacts with FBXL13/DRC6, DRC3 and DRC7.

It is found in the cell projection. The protein resides in the cilium. The protein localises to the flagellum. Its subcellular location is the cytoplasm. It localises to the cytoskeleton. It is found in the flagellum axoneme. Functionally, component of the nexin-dynein regulatory complex (N-DRC) a key regulator of ciliary/flagellar motility which maintains the alignment and integrity of the distal axoneme and regulates microtubule sliding in motile axonemes. May play a role in the assembly of N-DRC. May be required for sperm motility. The chain is Dynein regulatory complex subunit 5 (TCTE1) from Macaca fascicularis (Crab-eating macaque).